The sequence spans 287 residues: Ribosomal RNA small subunit methyltransferase A (287 aa).

Residues Asn-28, Leu-30, Gly-55, Glu-77, Asp-103, and Asn-123 each coordinate S-adenosyl-L-methionine.

It belongs to the class I-like SAM-binding methyltransferase superfamily. rRNA adenine N(6)-methyltransferase family. RsmA subfamily.

It is found in the cytoplasm. It carries out the reaction adenosine(1518)/adenosine(1519) in 16S rRNA + 4 S-adenosyl-L-methionine = N(6)-dimethyladenosine(1518)/N(6)-dimethyladenosine(1519) in 16S rRNA + 4 S-adenosyl-L-homocysteine + 4 H(+). Functionally, specifically dimethylates two adjacent adenosines (A1518 and A1519) in the loop of a conserved hairpin near the 3'-end of 16S rRNA in the 30S particle. May play a critical role in biogenesis of 30S subunits. This Nitrobacter winogradskyi (strain ATCC 25391 / DSM 10237 / CIP 104748 / NCIMB 11846 / Nb-255) protein is Ribosomal RNA small subunit methyltransferase A.